The chain runs to 472 residues: Meiotic spindle formation protein mei-1 (472 aa).

The disordered stretch occupies residues 83–161 (HEAMTRQSGS…TQGILPQNSA (79 aa)). S92 is modified (phosphoserine; by mbk-2). 2 stretches are compositionally biased toward polar residues: residues 134–143 (KSTSSMSTNP) and 150–161 (NPTQGILPQNSA). ATP is bound by residues 233–240 (GPPGTGKT) and 351–352 (RR).

This sequence belongs to the AAA ATPase family. Katanin p60 subunit A1 subfamily. Homohexamer; ATP hydrolysis initiates a cycle between an open spiral and a closed ring conformation which is probably involved in pulling tubulin dimers out from microtubules. Interacts with mei-2, which may serve as a targeting subunit. Interacts with mel-26, which targets mei-1 for ubiquitin mediated proteolysis. Interacts with phosphatase pph-4.1. Phosphorylated. Phosphorylation by mbk-2 is required for its rapid degradation following meiosis II. Likely dephosphorylated by the PP4 complex composed of catalytic subunit pph-4.1 and regulatory subunit ppfr-1. In terms of processing, polyubiquitination targets the protein for rapid degradation via the ubiquitin system at the end of meiosis. The BTB domain protein mel-26 may serve to specifically target mei-1 for ubiquitination by cul-3 containing complexes. The cul-3 protein is in turn regulated by neddylation by ned-8.

The protein resides in the cytoplasm. It is found in the cytoskeleton. The protein localises to the spindle pole. Its subcellular location is the chromosome. It carries out the reaction n ATP + n H2O + a microtubule = n ADP + n phosphate + (n+1) alpha/beta tubulin heterodimers.. With respect to regulation, ATPase activity is stimulated by microtubules, which promote homooligomerization. ATP-dependent microtubule severing is stimulated by interaction with mei-2. Catalytic subunit of a complex which severs microtubules in an ATP-dependent manner. Microtubule severing may promote rapid reorganization of cellular microtubule arrays. Required specifically for meiotic spindle formation in the female germline; the presence of this protein is inimical to the formation of mitotic spindles. In body wall muscles, regulates organization of myosin thick filaments. The protein is Meiotic spindle formation protein mei-1 of Caenorhabditis elegans.